Consider the following 157-residue polypeptide: Protein-export protein SecB (157 aa).

It belongs to the SecB family. As to quaternary structure, homotetramer, a dimer of dimers. One homotetramer interacts with 1 SecA dimer.

Its subcellular location is the cytoplasm. Its function is as follows. One of the proteins required for the normal export of preproteins out of the cell cytoplasm. It is a molecular chaperone that binds to a subset of precursor proteins, maintaining them in a translocation-competent state. It also specifically binds to its receptor SecA. This chain is Protein-export protein SecB, found in Shewanella frigidimarina (strain NCIMB 400).